Here is a 126-residue protein sequence, read N- to C-terminus: MSWQDYVDNQLLASQCVTKACIAGHDGNIWAQSSGFEVTKEELSKLISGFDQQDGLTSNGVTLAGQRYIYLSGTDRVVRAKLGRSGVHCMKTTQAVIVSIYEDPVQPQQAASVVEKLGDYLITCGY.

This sequence belongs to the profilin family. As to quaternary structure, occurs in many kinds of cells as a complex with monomeric actin in a 1:1 ratio. Expressed in ovary and head.

The protein localises to the cytoplasm. It is found in the cytoskeleton. Its function is as follows. Binds to actin and affects the structure of the cytoskeleton. At high concentrations, profilin prevents the polymerization of actin, whereas it enhances it at low concentrations. By binding to PIP2, it may inhibit the formation of IP3 and DG. This profilin is required for intercellular cytoplasm transport during Drosophila oogenesis. Function in neurons is essential for adult survival, and is important for climbing behavior and activity. In Drosophila melanogaster (Fruit fly), this protein is Profilin (chic).